The primary structure comprises 659 residues: Macrolide export ATP-binding/permease protein MacB (659 aa).

The ABC transporter domain maps to 10–249 (IELRGIRKRY…QPLLHHAGLS (240 aa)). Residue 47 to 54 (GSSGSGKS) coordinates ATP. 4 consecutive transmembrane segments (helical) span residues 287–307 (SLTL…LAIG), 538–558 (LGLV…NVML), 594–614 (ITGG…LVFW), and 619–639 (VFSF…GLIF).

It belongs to the ABC transporter superfamily. Macrolide exporter (TC 3.A.1.122) family. Homodimer.

The protein resides in the cell inner membrane. Functionally, non-canonical ABC transporter that contains transmembrane domains (TMD), which form a pore in the inner membrane, and an ATP-binding domain (NBD), which is responsible for energy generation. Confers resistance against macrolides. The chain is Macrolide export ATP-binding/permease protein MacB from Nitrosomonas europaea (strain ATCC 19718 / CIP 103999 / KCTC 2705 / NBRC 14298).